The chain runs to 494 residues: Aspartyl/glutamyl-tRNA(Asn/Gln) amidotransferase subunit B (494 aa).

Belongs to the GatB/GatE family. GatB subfamily. As to quaternary structure, heterotrimer of A, B and C subunits.

The enzyme catalyses L-glutamyl-tRNA(Gln) + L-glutamine + ATP + H2O = L-glutaminyl-tRNA(Gln) + L-glutamate + ADP + phosphate + H(+). It catalyses the reaction L-aspartyl-tRNA(Asn) + L-glutamine + ATP + H2O = L-asparaginyl-tRNA(Asn) + L-glutamate + ADP + phosphate + 2 H(+). Functionally, allows the formation of correctly charged Asn-tRNA(Asn) or Gln-tRNA(Gln) through the transamidation of misacylated Asp-tRNA(Asn) or Glu-tRNA(Gln) in organisms which lack either or both of asparaginyl-tRNA or glutaminyl-tRNA synthetases. The reaction takes place in the presence of glutamine and ATP through an activated phospho-Asp-tRNA(Asn) or phospho-Glu-tRNA(Gln). In Synechococcus sp. (strain CC9605), this protein is Aspartyl/glutamyl-tRNA(Asn/Gln) amidotransferase subunit B.